Consider the following 432-residue polypeptide: Adenylosuccinate synthetase (432 aa).

GTP is bound by residues 13-19 (GDEGKGK) and 41-43 (GHT). Catalysis depends on Asp-14, which acts as the Proton acceptor. Residues Asp-14 and Gly-41 each coordinate Mg(2+). IMP is bound by residues 14 to 17 (DEGK), 39 to 42 (NAGH), Thr-130, Arg-144, Gln-225, Thr-240, and Arg-304. His-42 (proton donor) is an active-site residue. Position 300–306 (300–306 (AVTGRPR)) interacts with substrate. Residues Arg-306, 332–334 (KLD), and 415–417 (STG) each bind GTP.

Belongs to the adenylosuccinate synthetase family. Homodimer. It depends on Mg(2+) as a cofactor.

Its subcellular location is the cytoplasm. It carries out the reaction IMP + L-aspartate + GTP = N(6)-(1,2-dicarboxyethyl)-AMP + GDP + phosphate + 2 H(+). The protein operates within purine metabolism; AMP biosynthesis via de novo pathway; AMP from IMP: step 1/2. In terms of biological role, plays an important role in the de novo pathway of purine nucleotide biosynthesis. Catalyzes the first committed step in the biosynthesis of AMP from IMP. The chain is Adenylosuccinate synthetase from Actinobacillus pleuropneumoniae serotype 3 (strain JL03).